Here is a 304-residue protein sequence, read N- to C-terminus: Spore coat protein CotB (304 aa).

Its subcellular location is the spore coat. It localises to the spore. The protein localises to the perispore. Its function is as follows. Contributes to the formation of thick-exosporium spores. The sequence is that of Spore coat protein CotB from Clostridioides difficile (strain 630) (Peptoclostridium difficile).